The following is a 463-amino-acid chain: Elongation factor 1-alpha (463 aa).

The tr-type G domain occupies lysine 8–alanine 245. Positions glycine 17–serine 24 are G1. Glycine 17–serine 24 serves as a coordination point for GTP. The tract at residues glycine 73–aspartate 77 is G2. Positions aspartate 94 to glycine 97 are G3. Residues aspartate 94 to histidine 98 and asparagine 156 to aspartate 159 contribute to the GTP site. The interval asparagine 156–aspartate 159 is G4. A G5 region spans residues serine 197–tryptophan 199.

It belongs to the TRAFAC class translation factor GTPase superfamily. Classic translation factor GTPase family. EF-Tu/EF-1A subfamily. In terms of assembly, the 42S RNP particle comprises four subunits each of which contains one molecule of 5S RNA, three molecules of tRNA, two molecules of EF1-alpha and one molecule of the 5S RNA binding protein 43.

Its subcellular location is the cytoplasm. Functionally, this protein is one of two protein components of a 42S RNP particle that is very abundant in previtellogenic oocytes. A major function served by 42sp50 appears to be the storage of tRNAs for later use in oogenesis and early embryogenesis. Purified 42S particles can directly transfer aminoacyl tRNA to ribosomes. The polypeptide is Elongation factor 1-alpha (Xenopus laevis (African clawed frog)).